A 117-amino-acid polypeptide reads, in one-letter code: Ig heavy chain V region MOPC 104E (117 aa).

The Ig-like domain maps to glutamate 1–serine 116. An intrachain disulfide couples cysteine 22 to cysteine 96. N-linked (GlcNAc...) (high mannose) asparagine; atypical glycosylation occurs at asparagine 55.

In Mus musculus (Mouse), this protein is Ig heavy chain V region MOPC 104E.